The sequence spans 952 residues: Protein translocase subunit SecA (952 aa).

ATP is bound by residues Gln135, 153 to 157, and Asp575; that span reads GEGKT. A compositionally biased stretch (low complexity) spans 907–921; the sequence is AAPAAAIPGVSAKAA. Residues 907-946 form a disordered region; sequence AAPAAAIPGVSAKAATQSTTPAAKEIGRNDPCPCGSGKKY. The Zn(2+) site is built by Cys938, Cys940, Cys949, and Cys950.

The protein belongs to the SecA family. Monomer and homodimer. Part of the essential Sec protein translocation apparatus which comprises SecA, SecYEG and auxiliary proteins SecDF. Other proteins may also be involved. It depends on Zn(2+) as a cofactor.

It is found in the cell membrane. It localises to the cytoplasm. It catalyses the reaction ATP + H2O + cellular proteinSide 1 = ADP + phosphate + cellular proteinSide 2.. Functionally, part of the Sec protein translocase complex. Interacts with the SecYEG preprotein conducting channel. Has a central role in coupling the hydrolysis of ATP to the transfer of proteins into and across the cell membrane, serving as an ATP-driven molecular motor driving the stepwise translocation of polypeptide chains across the membrane. The polypeptide is Protein translocase subunit SecA (Dehalococcoides mccartyi (strain CBDB1)).